The primary structure comprises 430 residues: Serine/threonine-protein kinase Sgk1 (430 aa).

Positions 1-60 are necessary for localization to the mitochondria; the sequence is MTVKTEAARSTLTYSRMRGMVAILIAFMKQRRMGLNDFIQKLANNSYACKHPEVQSYLKI. Residues 66–92 are disordered; it reads PELMNANPSPPPSPSQQINLGPSSNPH. At Ser-74 the chain carries Phosphoserine. Ser-78 is subject to Phosphoserine; by MAPK7. A compositionally biased stretch (polar residues) spans 81–91; the sequence is QQINLGPSSNP. In terms of domain architecture, Protein kinase spans 98–354; the sequence is FHFLKVIGKG…FMEIKSHIFF (257 aa). ATP contacts are provided by residues 104-112 and Lys-127; that span reads IGKGSFGKV. Positions 131–141 match the Nuclear localization signal motif; that stretch reads KKAILKKKEEK. The Proton acceptor role is filled by Asp-222. The residue at position 256 (Thr-256) is a Phosphothreonine; by PDPK1. One can recognise an AGC-kinase C-terminal domain in the interval 355–430; the sequence is SLINWDDLIN…SYAPPMDSFL (76 aa). Thr-368 is subject to Phosphothreonine; by PKA. Phosphoserine is present on residues Ser-396, Ser-400, and Ser-421.

The protein belongs to the protein kinase superfamily. AGC Ser/Thr protein kinase family. As to quaternary structure, homodimer; disulfide-linked. Forms a trimeric complex with FBXW7 and NOTCH1. Interacts with MAPK3/ERK1, MAPK1/ERK2, MAP2K1/MEK1, MAP2K2/MEK2, NEDD4, NEDD4L, MAPK7, CREB1, SLC9A3R2/NHERF2 and KCNJ1/ROMK1. Associates with the mammalian target of rapamycin complex 2 (mTORC2) via an interaction with MAPKAP1/SIN1. Interacts with MAPT/TAU. Post-translationally, regulated by phosphorylation. Activated by phosphorylation on Ser-421 by mTORC2, transforming it into a substrate for PDPK1 which phosphorylates it on Thr-256. Phosphorylation on Ser-396 and Ser-400 are also essential for its activity. Phosphorylation on Ser-78 by MAPK7 is required for growth factor-induced cell cycle progression. In terms of processing, ubiquitinated by NEDD4L; which promotes proteasomal degradation. Ubiquitinated by SYVN1 at the endoplasmic reticulum; which promotes rapid proteasomal degradation and maintains a high turnover rate in resting cells. As to expression, expressed in most tissues with highest levels in the ovary, thymus and lung. In the kidney, expressed within glomeruli of the cortex, at low levels in outer medulla and moderate levels in inner medulla and papilla.

Its subcellular location is the cytoplasm. The protein localises to the nucleus. It localises to the endoplasmic reticulum membrane. It is found in the cell membrane. The protein resides in the mitochondrion. It carries out the reaction L-seryl-[protein] + ATP = O-phospho-L-seryl-[protein] + ADP + H(+). The enzyme catalyses L-threonyl-[protein] + ATP = O-phospho-L-threonyl-[protein] + ADP + H(+). With respect to regulation, two specific sites, one in the kinase domain (Thr-256) and the other in the C-terminal regulatory region (Ser-421), need to be phosphorylated for its full activation. Phosphorylation at Ser-396 and Ser-400 are also essential for its activity. Activated by WNK1, WNK2, WNK3 and WNK4. Functionally, serine/threonine-protein kinase which is involved in the regulation of a wide variety of ion channels, membrane transporters, cellular enzymes, transcription factors, neuronal excitability, cell growth, proliferation, survival, migration and apoptosis. Plays an important role in cellular stress response. Contributes to regulation of renal Na(+) retention, renal K(+) elimination, salt appetite, gastric acid secretion, intestinal Na(+)/H(+) exchange and nutrient transport, insulin-dependent salt sensitivity of blood pressure, salt sensitivity of peripheral glucose uptake, cardiac repolarization and memory consolidation. Up-regulates Na(+) channels: SCNN1A/ENAC, SCN5A and ASIC1/ACCN2, K(+) channels: KCNJ1/ROMK1, KCNA1-5, KCNQ1-5 and KCNE1, epithelial Ca(2+) channels: TRPV5 and TRPV6, chloride channels: BSND, CLCN2 and CFTR, glutamate transporters: SLC1A3/EAAT1, SLC1A2 /EAAT2, SLC1A1/EAAT3, SLC1A6/EAAT4 and SLC1A7/EAAT5, amino acid transporters: SLC1A5/ASCT2, SLC38A1/SN1 and SLC6A19, creatine transporter: SLC6A8, Na(+)/dicarboxylate cotransporter: SLC13A2/NADC1, Na(+)-dependent phosphate cotransporter: SLC34A2/NAPI-2B, glutamate receptor: GRIK2/GLUR6. Up-regulates carriers: SLC9A3/NHE3, SLC12A1/NKCC2, SLC12A3/NCC, SLC5A3/SMIT, SLC2A1/GLUT1, SLC5A1/SGLT1 and SLC15A2/PEPT2. Regulates enzymes: GSK3A/B, PMM2 and Na(+)/K(+) ATPase, and transcription factors: CTNNB1 and nuclear factor NF-kappa-B. Stimulates sodium transport into epithelial cells by enhancing the stability and expression of SCNN1A/ENAC. This is achieved by phosphorylating the NEDD4L ubiquitin E3 ligase, promoting its interaction with 14-3-3 proteins, thereby preventing it from binding to SCNN1A/ENAC and targeting it for degradation. Regulates store-operated Ca(+2) entry (SOCE) by stimulating ORAI1 and STIM1. Regulates KCNJ1/ROMK1 directly via its phosphorylation or indirectly via increased interaction with SLC9A3R2/NHERF2. Phosphorylates MDM2 and activates MDM2-dependent ubiquitination of p53/TP53. Phosphorylates SLC2A4/GLUT4 and up-regulates its activity. Phosphorylates APBB1/FE65 and promotes its localization to the nucleus. Phosphorylates FBXW7 and plays an inhibitory role in the NOTCH1 signaling. Phosphorylates FOXO1 resulting in its relocalization from the nucleus to the cytoplasm. Phosphorylates FOXO3, promoting its exit from the nucleus and interference with FOXO3-dependent transcription. Phosphorylates BRAF and MAP3K3/MEKK3 and inhibits their activity. Phosphorylates SLC9A3/NHE3 in response to dexamethasone, resulting in its activation and increased localization at the cell membrane. Phosphorylates CREB1. Necessary for vascular remodeling during angiogenesis. Phosphorylates MAPT/TAU and mediates microtubule depolymerization and neurite formation in hippocampal neurons. Phosphorylates MAPK1/ERK2 and activates it by enhancing its interaction with MAP2K1/MEK1 and MAP2K2/MEK2. May also play an important role in the development of particular groups of neurons in the postnatal brain. This Rattus norvegicus (Rat) protein is Serine/threonine-protein kinase Sgk1 (Sgk1).